The chain runs to 257 residues: UPF0246 protein CV_1250 (257 aa).

The protein belongs to the UPF0246 family.

In Chromobacterium violaceum (strain ATCC 12472 / DSM 30191 / JCM 1249 / CCUG 213 / NBRC 12614 / NCIMB 9131 / NCTC 9757 / MK), this protein is UPF0246 protein CV_1250.